Here is a 415-residue protein sequence, read N- to C-terminus: Calreticulin (415 aa).

The first 20 residues, 1-20 (MANPKSLSLFLLSLLAIASA), serve as a signal peptide directing secretion. N52 carries an N-linked (GlcNAc...) asparagine glycan. An intrachain disulfide couples C106 to C138. 4 residues coordinate an alpha-D-glucoside: Y110, K112, Y129, and D136. N-linked (GlcNAc...) asparagine glycosylation is present at N152. 7 tandem repeats follow at residues 192 to 203 (KQTGSLYTDWDL), 211 to 222 (DPEAKKPEDWDE), 228 to 239 (DPEDKKPEGYDD), 246 to 257 (DPDAKKPEDWDD), 261 to 271 (GEWTAPTIANP), 275 to 285 (GPWKPKKIKNP), and 289 to 299 (GKWKAPMIDNP). A 4 X approximate repeats region spans residues 192–257 (KQTGSLYTDW…DAKKPEDWDD (66 aa)). The segment covering 208–253 (KIKDPEAKKPEDWDEKEYIPDPEDKKPEGYDDIPKEIPDPDAKKPE) has biased composition (basic and acidic residues). Residues 208–276 (KIKDPEAKKP…TIANPEYKGP (69 aa)) are disordered. The segment at 261-299 (GEWTAPTIANPEYKGPWKPKKIKNPNYKGKWKAPMIDNP) is 3 X approximate repeats. E319 is an an alpha-D-glucoside binding site. Over residues 347–376 (ETWGKNKDAEKAAFEEAEKKKEEEESKDDP) the composition is skewed to basic and acidic residues. A disordered region spans residues 347–415 (ETWGKNKDAE…DSAEDVHDEL (69 aa)). Composition is skewed to acidic residues over residues 377-397 (ADSD…EDDG) and 404-415 (AEDSAEDVHDEL). Positions 412 to 415 (HDEL) match the Prevents secretion from ER motif.

The protein belongs to the calreticulin family.

It is found in the endoplasmic reticulum lumen. Molecular calcium-binding chaperone promoting folding, oligomeric assembly and quality control in the ER via the calreticulin/calnexin cycle. This lectin may interact transiently with almost all of the monoglucosylated glycoproteins that are synthesized in the ER. The chain is Calreticulin from Ricinus communis (Castor bean).